The sequence spans 165 residues: Chorismate pyruvate-lyase (165 aa).

Substrate-binding residues include methionine 35, arginine 77, leucine 115, and glutamate 156.

Belongs to the UbiC family. Monomer.

Its subcellular location is the cytoplasm. The catalysed reaction is chorismate = 4-hydroxybenzoate + pyruvate. It participates in cofactor biosynthesis; ubiquinone biosynthesis. Removes the pyruvyl group from chorismate, with concomitant aromatization of the ring, to provide 4-hydroxybenzoate (4HB) for the ubiquinone pathway. The protein is Chorismate pyruvate-lyase of Escherichia coli O7:K1 (strain IAI39 / ExPEC).